The sequence spans 1029 residues: Carbamoyl phosphate synthase large chain (1029 aa).

The interval 1–402 (MPKRTDLQTI…SLQKALRSTE (402 aa)) is carboxyphosphate synthetic domain. Positions 129, 169, 175, 176, 208, 210, 215, 241, 242, 243, 285, and 299 each coordinate ATP. One can recognise an ATP-grasp 1 domain in the interval 133-328 (QAAMKKIGVE…IAKIAALLAV (196 aa)). 3 residues coordinate Mg(2+): glutamine 285, glutamate 299, and asparagine 301. Positions 285, 299, and 301 each coordinate Mn(2+). The oligomerization domain stretch occupies residues 403-546 (SDVRGAFAEM…YSTYEWEDEV (144 aa)). The segment at 547 to 929 (TPTDKPKVVI…AYYRAELGAK (383 aa)) is carbamoyl phosphate synthetic domain. The 193-residue stretch at 671–863 (NALCERLGLP…LAKYAARIAV (193 aa)) folds into the ATP-grasp 2 domain. The ATP site is built by arginine 707, glutamine 747, leucine 749, glutamate 754, glycine 779, valine 780, histidine 781, serine 782, glutamine 822, and glutamate 834. Residues glutamine 822, glutamate 834, and asparagine 836 each contribute to the Mg(2+) site. Residues glutamine 822, glutamate 834, and asparagine 836 each coordinate Mn(2+). One can recognise an MGS-like domain in the interval 930 to 1028 (SNLPLSGTAL…QAWQQREAAA (99 aa)). Residues 930–1029 (SNLPLSGTAL…AWQQREAAAS (100 aa)) form an allosteric domain region.

It belongs to the CarB family. Composed of two chains; the small (or glutamine) chain promotes the hydrolysis of glutamine to ammonia, which is used by the large (or ammonia) chain to synthesize carbamoyl phosphate. Tetramer of heterodimers (alpha,beta)4. The cofactor is Mg(2+). Requires Mn(2+) as cofactor.

The catalysed reaction is hydrogencarbonate + L-glutamine + 2 ATP + H2O = carbamoyl phosphate + L-glutamate + 2 ADP + phosphate + 2 H(+). The enzyme catalyses hydrogencarbonate + NH4(+) + 2 ATP = carbamoyl phosphate + 2 ADP + phosphate + 2 H(+). Its pathway is amino-acid biosynthesis; L-arginine biosynthesis; carbamoyl phosphate from bicarbonate: step 1/1. It participates in pyrimidine metabolism; UMP biosynthesis via de novo pathway; (S)-dihydroorotate from bicarbonate: step 1/3. Its function is as follows. Large subunit of the glutamine-dependent carbamoyl phosphate synthetase (CPSase). CPSase catalyzes the formation of carbamoyl phosphate from the ammonia moiety of glutamine, carbonate, and phosphate donated by ATP, constituting the first step of 2 biosynthetic pathways, one leading to arginine and/or urea and the other to pyrimidine nucleotides. The large subunit (synthetase) binds the substrates ammonia (free or transferred from glutamine from the small subunit), hydrogencarbonate and ATP and carries out an ATP-coupled ligase reaction, activating hydrogencarbonate by forming carboxy phosphate which reacts with ammonia to form carbamoyl phosphate. The sequence is that of Carbamoyl phosphate synthase large chain from Deinococcus geothermalis (strain DSM 11300 / CIP 105573 / AG-3a).